The following is a 177-amino-acid chain: Small ribosomal subunit protein uS5 (177 aa).

Residues 21 to 84 (LLDRVVKIKR…KQASRSMIHV (64 aa)) form the S5 DRBM domain.

Belongs to the universal ribosomal protein uS5 family. In terms of assembly, part of the 30S ribosomal subunit. Contacts proteins S4 and S8.

Its function is as follows. With S4 and S12 plays an important role in translational accuracy. Located at the back of the 30S subunit body where it stabilizes the conformation of the head with respect to the body. This is Small ribosomal subunit protein uS5 from Rhodopirellula baltica (strain DSM 10527 / NCIMB 13988 / SH1).